Reading from the N-terminus, the 251-residue chain is Sugar fermentation stimulation protein homolog (251 aa).

Belongs to the SfsA family.

The protein is Sugar fermentation stimulation protein homolog of Prochlorococcus marinus (strain SARG / CCMP1375 / SS120).